The following is a 171-amino-acid chain: S-ribosylhomocysteine lyase (171 aa).

Positions 54, 58, and 128 each coordinate Fe cation.

The protein belongs to the LuxS family. As to quaternary structure, homodimer. It depends on Fe cation as a cofactor.

It carries out the reaction S-(5-deoxy-D-ribos-5-yl)-L-homocysteine = (S)-4,5-dihydroxypentane-2,3-dione + L-homocysteine. Functionally, involved in the synthesis of autoinducer 2 (AI-2) which is secreted by bacteria and is used to communicate both the cell density and the metabolic potential of the environment. The regulation of gene expression in response to changes in cell density is called quorum sensing. Catalyzes the transformation of S-ribosylhomocysteine (RHC) to homocysteine (HC) and 4,5-dihydroxy-2,3-pentadione (DPD). The polypeptide is S-ribosylhomocysteine lyase (Klebsiella pneumoniae (strain 342)).